A 385-amino-acid chain; its full sequence is MAARVLMAPRRLKPFNRLQVILQHLKTCKHTDSAADVLLQKQGGAGIITLNRPKVLNALSFKMIQQIYPQIKAWEQDPETFLIIIKGTGEKAFCAGGDVRAIADAGKAGDTMTRDYFREEYRLDNAIGTCKKPYVALIDGITMGGGVGLSVHGHFRVATEKTVFAMPETAIGLFPDVGGGYFLPRLSGKIGHLLALTGFRLKGRDVLKAGIATHFVESGKLPELEKDLIALKSPSKENIADLLNSYHMQTKIDQEKEFVLDEHMERINSIFSANSMEEIVQKLKQDGSPFATKQLEAINKMSPTSLKLTLRQLREGATMSLQDVFTMEYRLSQACMRGHDFYEGVRAVLIDKDQSPRWKPAALEEVSDEFVDNCFKPLGNNDLKL.

Substrate is bound by residues glutamate 120, glycine 145, glutamate 168, and aspartate 176.

The protein belongs to the enoyl-CoA hydratase/isomerase family.

The protein localises to the mitochondrion. The enzyme catalyses 3-hydroxy-2-methylpropanoyl-CoA + H2O = 3-hydroxy-2-methylpropanoate + CoA + H(+). It participates in amino-acid degradation; L-valine degradation. Hydrolyzes 3-hydroxyisobutyryl-CoA (HIBYL-CoA), a saline catabolite. Has high activity toward isobutyryl-CoA. Could be an isobutyryl-CoA dehydrogenase that functions in valine catabolism. Also hydrolyzes 3-hydroxypropanoyl-CoA. This chain is 3-hydroxyisobutyryl-CoA hydrolase, mitochondrial (HIBCH), found in Gallus gallus (Chicken).